The sequence spans 1580 residues: Adhesion G protein-coupled receptor L3 (1580 aa).

The signal sequence occupies residues 1–19 (MWPSQLLVFMMLLAPIIHG). At 20–949 (GKHSERHPAL…VHDLLLDVIT (930 aa)) the chain is on the extracellular side. Positions 23–81 (SERHPALASPLRHAERGPGGALPPRHLLQQPAAERATAHRGPGPRGATRGVRGPGAHGA) are disordered. Residues 103-192 (SCESYPIELR…KYLEVQYECV (90 aa)) form the SUEL-type lectin domain. 5 disulfide bridges follow: Cys-104/Cys-134, Cys-113/Cys-191, Cys-146/Cys-178, Cys-159/Cys-165, and Cys-203/Cys-385. A glycan (N-linked (GlcNAc...) asparagine) is linked at Asn-161. The Olfactomedin-like domain maps to 202-461 (LCPGLLKGVY…VVKYSLDFGP (260 aa)). Residues 317-347 (YHDTSPYRWGGKSDIDLAVDENGLWVIYATE) are interaction with FLRT3. Residues Asp-332, Asn-380, Ala-381, and Val-435 each contribute to the Ca(2+) site. Residues 494-540 (EISTTGPLGTGSTTTSTTLRTTTWSPGRSTTPSVSGRRNRSTSTPSP) form a disordered region. Positions 496 to 521 (STTGPLGTGSTTTSTTLRTTTWSPGR) are enriched in low complexity. Residues 522–539 (STTPSVSGRRNRSTSTPS) are compositionally biased toward polar residues. Asn-532, Asn-617, Asn-827, Asn-840, Asn-885, and Asn-911 each carry an N-linked (GlcNAc...) asparagine glycan. Positions 756-935 (DIVRENTDNI…AVLMAHVEVK (180 aa)) constitute a GAIN-B domain. 2 disulfide bridges follow: Cys-886-Cys-917 and Cys-905-Cys-919. Positions 886-935 (CSFWSYSKRTMTGYWSTQGCRLLTTNKTHTTCSCNHLTNFAVLMAHVEVK) are GPS. The stachel stretch occupies residues 923-939 (TNFAVLMAHVEVKHSDA). Residues 950-970 (WVGILLSLVCLLICIFTFCFF) form a helical membrane-spanning segment. Over 971-978 (RGLQSDRN) the chain is Cytoplasmic. Residues 979–999 (TIHKNLCISLFVAELLFLIGI) form a helical membrane-spanning segment. N-linked (GlcNAc...) asparagine glycosylation is present at Asn-1000. Topologically, residues 1000–1007 (NRTDQPIA) are extracellular. A helical transmembrane segment spans residues 1008–1028 (CAVFAALLHFFFLAAFTWMFL). The Cytoplasmic segment spans residues 1029-1050 (EGVQLYIMLVEVFESEHSRRKY). The chain crosses the membrane as a helical span at residues 1051-1071 (FYLVGYGMPALIVAVSAAVDY). Topologically, residues 1072 to 1088 (RSYGTDKVCWLRLDTYF) are extracellular. A helical membrane pass occupies residues 1089–1109 (IWSFIGPATLIIMLNVIFLGI). Residues 1110-1142 (ALYKMFHHTAILKPESGCLDNINYEDNRPFIKS) are Cytoplasmic-facing. Residues 1143 to 1163 (WVIGAIALLCLLGLTWAFGLM) form a helical membrane-spanning segment. Residues 1164–1169 (YINEST) are Extracellular-facing. The N-linked (GlcNAc...) asparagine glycan is linked to Asn-1166. Residues 1170-1190 (VIMAYLFTIFNSLQGMFIFIF) form a helical membrane-spanning segment. At 1191-1580 (HCVLQKKVRK…KGPAHLVTSL (390 aa)) the chain is on the cytoplasmic side. The interval 1213-1238 (GRSTESSIGSGKTSGSRTPGRYSTGS) is disordered. Ser-1254 bears the Phosphoserine mark. Residues 1555-1580 (FIVPPNKDGTPPEGSSKGPAHLVTSL) are disordered. The PDZ-binding motif lies at 1575-1580 (HLVTSL).

It belongs to the G-protein coupled receptor 2 family. LN-TM7 subfamily. In terms of assembly, heterodimer of 2 chains generated by proteolytic processing; the large extracellular N-terminal fragment and the membrane-bound C-terminal fragment predominantly remain associated and non-covalently linked. Interacts (via olfactomedin-like domain) with FLRT1 (via extracellular domain). Interacts (via olfactomedin-like domain) with FLRT2 (via extracellular domain). Interacts (via olfactomedin-like domain) with FLRT3 (via extracellular domain); the interaction is direct. Interacts (via extracellular domain) with TENM1. Interacts (via extracellular domain) with TENM2. Interacts (via extracellular domain) with TENM3. Identified in a complex with FLRT3 and UNC5B; does not interact with UNC5B by itself. Identified in a complex with FLRT3 and UNC5D; does not interact with UNC5D by itself. Interacts (via PDZ-binding motif) with SHANK3. Interacts (via PDZ-binding motif) with DLG4. In terms of processing, autoproteolytically processed at the GPS region of the GAIN-B domain; this cleavage modulates receptor activity. As to expression, brain-specific distribution but low levels are also detected in lung and spleen.

The protein resides in the cell membrane. The protein localises to the postsynaptic cell membrane. It localises to the cell projection. Its subcellular location is the axon. It is found in the cell junction. Its activity is regulated as follows. Forms a heterodimer of 2 chains generated by proteolytic processing that remain associated through non-covalent interactions mediated by the GAIN-B domain. In the inactivated receptor, the Stachel sequence (also named stalk) is embedded in the GAIN-B domain, where it adopts a beta-strand conformation. On activation, the Stachel moves into the 7 transmembrane region and adopts a twisted hook-shaped configuration that forms contacts within the receptor, leading to coupling of a G-alpha protein, which activates signaling. The cleaved GAIN-B and N-terminal domains can then dissociate from the rest of the receptor. In terms of biological role, orphan adhesion G-protein coupled receptor (aGPCR), which mediates synapse specificity. Ligand binding causes a conformation change that triggers signaling via guanine nucleotide-binding proteins (G proteins) and modulates the activity of downstream effectors. ADGRL3 is coupled with different classes of G alpha proteins, such as G(12)/G(13), G(s), G(i) or G(q), depending on the context. Coupling to G(12)/G(13) G proteins, which mediates the activation Rho small GTPases is the most efficient. Following G-protein coupled receptor activation, associates with cell adhesion molecules that are expressed at the surface of adjacent cells to direct synapse specificity. Specifically mediates the establishment of Schaffer-collateral synapses formed by CA3-region axons on CA1-region pyramidal neurons in the hippocampus. Localizes to postsynaptic spines in excitatory synapses in the S.oriens and S.radiatum and interacts with presynaptic cell adhesion molecules FLRT3 and TENM2, promoting synapse formation. Plays a role in the development of glutamatergic synapses in the cortex. Important in determining the connectivity rates between the principal neurons in the cortex. Its function is as follows. Orphan adhesion G-protein coupled receptor (aGPCR), which mediates synapse specificity. Ligand binding causes a conformation change that triggers signaling via guanine nucleotide-binding proteins (G proteins) and modulates the activity of downstream effectors, such as adenylate cyclase. Isoform 1 is specifically coupled to G(s) G proteins and mediates activation of adenylate cyclase activity. Following G-protein coupled receptor activation, undergoes liquid-liquid phase transition, associates with (1) cell adhesion molecules that are expressed at the surface of adjacent cells, as well as (2) PDZ-containing proteins, such as SHANK3 and DLG4, in the cytoplasm to direct synapse formation. This chain is Adhesion G protein-coupled receptor L3, found in Bos taurus (Bovine).